We begin with the raw amino-acid sequence, 209 residues long: Ribosomal RNA large subunit methyltransferase E (209 aa).

S-adenosyl-L-methionine is bound by residues Gly-63, Trp-65, Asp-83, Asp-99, and Asp-124. Catalysis depends on Lys-164, which acts as the Proton acceptor.

The protein belongs to the class I-like SAM-binding methyltransferase superfamily. RNA methyltransferase RlmE family.

It localises to the cytoplasm. The enzyme catalyses uridine(2552) in 23S rRNA + S-adenosyl-L-methionine = 2'-O-methyluridine(2552) in 23S rRNA + S-adenosyl-L-homocysteine + H(+). Its function is as follows. Specifically methylates the uridine in position 2552 of 23S rRNA at the 2'-O position of the ribose in the fully assembled 50S ribosomal subunit. The chain is Ribosomal RNA large subunit methyltransferase E from Shewanella halifaxensis (strain HAW-EB4).